Consider the following 260-residue polypeptide: MLPVAGSDVTVWSPQGRIHQIEYAMEAVKQGSATVGLKSKTHAVLVALKRAQSELAAHQKKILYVDNHIGISIAGLTADARLLCNFMRQECLDSRFVFDRPLPVSRLVSLIGSKTQIPTQRYGRRPYGVGLLIAGYDDMGPHIFQTCPSANYFDCKAMSIGARSQSARNYLERHMTEFTDCNLNELVKHGLRALRETLPAEQDLTTKNVSIGIVGKDMEFTIYDDDDVAPFLEGLEERPQRKPALPADEPAEKAEEPMEH.

The tract at residues 231-260 (FLEGLEERPQRKPALPADEPAEKAEEPMEH) is disordered. The span at 250–260 (PAEKAEEPMEH) shows a compositional bias: basic and acidic residues.

Belongs to the peptidase T1A family. As to quaternary structure, the 26S proteasome consists of a 20S proteasome core and two 19S regulatory subunits. The 20S proteasome core is a barrel-shaped complex made of 28 subunits that are arranged in four stacked rings. The two outer rings are each formed by seven alpha subunits, and the two inner rings are formed by seven beta subunits. The proteolytic activity is exerted by three beta-subunits PSMB5, PSMB6 and PSMB7.

The protein localises to the cytoplasm. It is found in the nucleus. In terms of biological role, component of the 20S core proteasome complex involved in the proteolytic degradation of most intracellular proteins. This complex plays numerous essential roles within the cell by associating with different regulatory particles. Associated with two 19S regulatory particles, forms the 26S proteasome and thus participates in the ATP-dependent degradation of ubiquitinated proteins. The 26S proteasome plays a key role in the maintenance of protein homeostasis by removing misfolded or damaged proteins that could impair cellular functions, and by removing proteins whose functions are no longer required. Associated with the PA200 or PA28, the 20S proteasome mediates ubiquitin-independent protein degradation. This type of proteolysis is required in several pathways including spermatogenesis (20S-PA200 complex) or generation of a subset of MHC class I-presented antigenic peptides (20S-PA28 complex). The chain is Proteasome subunit alpha type-1 (PSMA1) from Gallus gallus (Chicken).